The sequence spans 87 residues: uncharacterized protein (87 aa).

A 2Fe-2S ferredoxin-type domain is found at 4–87 (SIIEITNIKK…KPKGNITIKI (84 aa)). Positions 38, 43, 46, and 75 each coordinate [2Fe-2S] cluster.

The cofactor is [2Fe-2S] cluster.

This is an uncharacterized protein from Buchnera aphidicola subsp. Acyrthosiphon pisum (strain APS) (Acyrthosiphon pisum symbiotic bacterium).